The following is a 63-amino-acid chain: Small ribosomal subunit protein eS17 (63 aa).

It belongs to the eukaryotic ribosomal protein eS17 family.

This is Small ribosomal subunit protein eS17 from Methanococcus maripaludis (strain DSM 14266 / JCM 13030 / NBRC 101832 / S2 / LL).